We begin with the raw amino-acid sequence, 142 residues long: Ninjurin-2 (142 aa).

Positions 1-21 are disordered; sequence MESARENIDLQPGSSDPRSQP. Topologically, residues 1–60 are extracellular; it reads MESARENIDLQPGSSDPRSQPINLNHYATKKSVAESMLDVALFMSNAMRLKAVLEQGPSS. Over residues 12-21 the composition is skewed to polar residues; it reads PGSSDPRSQP. The helix alpha1 stretch occupies residues 25-37; the sequence is NHYATKKSVAESM. The tract at residues 38 to 57 is helix alpha2; sequence LDVALFMSNAMRLKAVLEQG. Residues 61–92 form a helical membrane-spanning segment; the sequence is HYYTTLVTLISLSLLLQVVIGVLLVVIARLNL. Residues 93–96 lie on the Cytoplasmic side of the membrane; that stretch reads NEVE. Residues 97-126 traverse the membrane as a helical segment; the sequence is KQWRLNQLNNAATILVFFTVVINVFITAFG. Residue Q103 coordinates cholesterol. Topologically, residues 127–142 are extracellular; the sequence is AHKTGFLAARASRNPL.

This sequence belongs to the ninjurin family. Homooligomer; in response to stimuli, homooligomerizes into filaments. In contrast to NINJ1, the filament is curved toward the intracellular space, preventing its circularization on a relatively flat membrane to mediate plasma membrane rupture: curvature is caused by cholesterol-binding at the cytoplasmic leaflet. Widely expressed. In adult, higher expression in the bone marrow and peripheral blood lymphocytes, medium in the lung, lymph node, thyroid, uterus, thymus, spleen, prostate and skeletal muscle, lower in the liver, placenta, brain, heart and kidney. In embryo, higher expression in the thymus, heart and liver, lower in the spleen, lung, brain and kidney.

It localises to the cell membrane. Functionally, its role in unclear. In contrast to NINJ1 paralog, does not mediate plasma membrane rupture (cytolysis) downstream of necroptotic and pyroptotic programmed cell death. While it is able to oligomerize and form filaments, filaments are curved toward the intracellular space, preventing circularization to mediate plasma membrane rupture. May act as a homophilic transmembrane adhesion molecule involved in nerve regeneration. Promotes axonal growth. The chain is Ninjurin-2 from Homo sapiens (Human).